Here is a 345-residue protein sequence, read N- to C-terminus: Phosphoribosylformylglycinamidine cyclo-ligase (345 aa).

Belongs to the AIR synthase family.

It localises to the cytoplasm. It catalyses the reaction 2-formamido-N(1)-(5-O-phospho-beta-D-ribosyl)acetamidine + ATP = 5-amino-1-(5-phospho-beta-D-ribosyl)imidazole + ADP + phosphate + H(+). It functions in the pathway purine metabolism; IMP biosynthesis via de novo pathway; 5-amino-1-(5-phospho-D-ribosyl)imidazole from N(2)-formyl-N(1)-(5-phospho-D-ribosyl)glycinamide: step 2/2. The protein is Phosphoribosylformylglycinamidine cyclo-ligase of Escherichia coli O7:K1 (strain IAI39 / ExPEC).